A 150-amino-acid polypeptide reads, in one-letter code: Large ribosomal subunit protein bL9 (150 aa).

It belongs to the bacterial ribosomal protein bL9 family.

Its function is as follows. Binds to the 23S rRNA. The sequence is that of Large ribosomal subunit protein bL9 from Shewanella frigidimarina (strain NCIMB 400).